A 252-amino-acid polypeptide reads, in one-letter code: MSLLTEVETYVLSIVPSGPLKAEIAQRLEDVFAGKNTDLEALMEWLKTRPILSPLTKGILGFVFTLTVPSERGLQRRRFVQNALSGNGDPNNMDRAVKLYRKLKREITFHGAKEVALSYSTGALASCMGLIYNRMGTVTTEVAFGLVCATCEQIADSQHRSHRQMVTTTNPLIRHENRMVLASTTAKAMEQMAGSSEQAAEAMEVASKARQMVQAMRTIGTHPSSSAGLKDDLLENLQAYQKRMGVQMQRFK.

The membrane-binding stretch occupies residues 1–164 (MSLLTEVETY…ADSQHRSHRQ (164 aa)). The Nuclear localization signal signature appears at 101-105 (RKLKR). Positions 165–252 (MVTTTNPLIR…RMGVQMQRFK (88 aa)) are RNP-binding.

This sequence belongs to the influenza viruses Matrix protein M1 family. Homodimer and homomultimer. Interacts with NEP. Binds ribonucleocapsid by both interacting with genomic RNA and NP protein. May interact with HA and NA. Cannot bind NP without genomic RNA.

The protein resides in the virion membrane. It is found in the host nucleus. Plays critical roles in virus replication, from virus entry and uncoating to assembly and budding of the virus particle. M1 binding to ribonucleocapsids (RNPs) in nucleus seems to inhibit viral transcription. Interaction of viral NEP with M1-RNP is thought to promote nuclear export of the complex, which is targeted to the virion assembly site at the apical plasma membrane in polarized epithelial cells. Interactions with NA and HA may bring M1, a non-raft-associated protein, into lipid rafts. Forms a continuous shell on the inner side of the lipid bilayer in virion, where it binds the RNP. During virus entry into cell, the M2 ion channel acidifies the internal virion core, inducing M1 dissociation from the RNP. M1-free RNPs are transported to the nucleus, where viral transcription and replication can take place. In terms of biological role, determines the virion's shape: spherical or filamentous. Clinical isolates of influenza are characterized by the presence of significant proportion of filamentous virions, whereas after multiple passage on eggs or cell culture, virions have only spherical morphology. Filamentous virions are thought to be important to infect neighboring cells, and spherical virions more suited to spread through aerosol between hosts organisms. This Aves (Horse) protein is Matrix protein 1.